The chain runs to 141 residues: Large ribosomal subunit protein uL11 (141 aa).

It belongs to the universal ribosomal protein uL11 family. As to quaternary structure, part of the ribosomal stalk of the 50S ribosomal subunit. Interacts with L10 and the large rRNA to form the base of the stalk. L10 forms an elongated spine to which L12 dimers bind in a sequential fashion forming a multimeric L10(L12)X complex. Post-translationally, one or more lysine residues are methylated.

In terms of biological role, forms part of the ribosomal stalk which helps the ribosome interact with GTP-bound translation factors. The sequence is that of Large ribosomal subunit protein uL11 from Lactococcus lactis subsp. cremoris (strain MG1363).